Reading from the N-terminus, the 172-residue chain is uncharacterized protein (172 aa).

A helical transmembrane segment spans residues 109 to 129; sequence MLLLYLYYNLLLLTASTPLTF.

Its subcellular location is the membrane. This is an uncharacterized protein from Saccharomyces cerevisiae (strain ATCC 204508 / S288c) (Baker's yeast).